We begin with the raw amino-acid sequence, 178 residues long: uncharacterized protein (178 aa).

Helical transmembrane passes span methionine 1–glycine 21, methionine 47–glycine 67, glycine 75–leucine 95, valine 117–isoleucine 137, and methionine 158–leucine 178.

It belongs to the chromate ion transporter (CHR) (TC 2.A.51) family.

The protein localises to the cell membrane. This is an uncharacterized protein from Bacillus subtilis (strain 168).